Reading from the N-terminus, the 197-residue chain is Recombination protein RecR (197 aa).

Residues 55–70 (CVQCRDFTESEICTIC) form a C4-type zinc finger. Positions 78 to 173 (QQLCVVESPA…RPSRLAQGMP (96 aa)) constitute a Toprim domain.

This sequence belongs to the RecR family.

In terms of biological role, may play a role in DNA repair. It seems to be involved in an RecBC-independent recombinational process of DNA repair. It may act with RecF and RecO. This chain is Recombination protein RecR, found in Xanthomonas euvesicatoria pv. vesicatoria (strain 85-10) (Xanthomonas campestris pv. vesicatoria).